A 172-amino-acid chain; its full sequence is MRYTNSHLEDWIENLYKKIDITEPEQINFERIAEALDIRLSFKPVTSFALKHSGIYNICLDSRKSRTEQWYDFAHEFCHIYRHEGDKKTMPATWTDYLDWQSNYFTYHFCIPTCMLRNINLPYIQSHAIENVAWLFKVSPSFAKKRLSIYYRKLTQHLFSQTVTGNLCPPFL.

This is an uncharacterized protein from Bacillus subtilis (strain 168).